We begin with the raw amino-acid sequence, 95 residues long: Small ribosomal subunit protein bS6 (95 aa).

Belongs to the bacterial ribosomal protein bS6 family.

Functionally, binds together with bS18 to 16S ribosomal RNA. In Onion yellows phytoplasma (strain OY-M), this protein is Small ribosomal subunit protein bS6.